The chain runs to 260 residues: MVKFYDREISSRLLIGSALYPSPAIMQDSIRESGADIVTVSLRREAAGGKAGDQFWSLIRELGVTVLPNTAGCRSVREAVTTAKLARELFGTAWIKLEVIADNDTLQPDVVGLVEAAQILTKDGFEVFPYCTEDLSVAMRLVDAGCRVIMPWAAPIGSARGIVARDALKLLRDRLPDITLVVDAGLGAPSHAAEAMELGYDAVLLNTAIAKAEDPVAMARAFKLAVEAGRTGFEAGLMGARDFASPSTPVIGTPFWHAVS.

The active-site Schiff-base intermediate with DXP is the lysine 96. 1-deoxy-D-xylulose 5-phosphate is bound by residues glycine 157, 184-185, and 206-207; these read AG and NT.

Belongs to the ThiG family. In terms of assembly, homotetramer. Forms heterodimers with either ThiH or ThiS.

The protein localises to the cytoplasm. The enzyme catalyses [ThiS sulfur-carrier protein]-C-terminal-Gly-aminoethanethioate + 2-iminoacetate + 1-deoxy-D-xylulose 5-phosphate = [ThiS sulfur-carrier protein]-C-terminal Gly-Gly + 2-[(2R,5Z)-2-carboxy-4-methylthiazol-5(2H)-ylidene]ethyl phosphate + 2 H2O + H(+). It participates in cofactor biosynthesis; thiamine diphosphate biosynthesis. Its function is as follows. Catalyzes the rearrangement of 1-deoxy-D-xylulose 5-phosphate (DXP) to produce the thiazole phosphate moiety of thiamine. Sulfur is provided by the thiocarboxylate moiety of the carrier protein ThiS. In vitro, sulfur can be provided by H(2)S. This is Thiazole synthase from Rhodopseudomonas palustris (strain HaA2).